The following is a 103-amino-acid chain: Small ribosomal subunit protein uS10 (103 aa).

The protein belongs to the universal ribosomal protein uS10 family. Part of the 30S ribosomal subunit.

Its function is as follows. Involved in the binding of tRNA to the ribosomes. The polypeptide is Small ribosomal subunit protein uS10 (Dechloromonas aromatica (strain RCB)).